The following is a 608-amino-acid chain: MASTLDLDKGCTVEELLRGCIEAFDDSGKVRDPQLVRMFLMMHPWYIPSSQLASKLLHFYQQSRKDNSNSLQVKTCHLVRYWVSAFPAEFDLNPELAEQIKELKALLDQEGNRRHSSLIDIESVPTYKWKRQVTQRNPVEQKKRKMSLLFDHLEPMELAEHLTYLEYRSFCKILFQDYHSFVTHGCTVDNPVLERFISLFNSVSQWVQLMILSKPTATQRALVITHFVHVAEKLLQLQNFNTLMAVVGGLSHSSISRLKETHSHVSPDTIKLWEGLTELVTATGNYSNYRRRLAACVGFRFPILGVHLKDLVALQLALPDWLDPGRTRLNGAKMRQLFSILEELAMVTSLRPPVQANPDLLSLLTVSLDQYQTEDELYQLSLQREPRSKSSPTSPTSCTPPPRPPVLEEWTSVAKPKLDQALVAEHIEKMVESVFRNFDVDGDGHISQEEFQIIRGNFPYLSAFGDLDQNQDGCISREEMISYFLRSSSVLGGRMGFVHNLQESNSLRPVACRHCKALILGIYKQGLKCRACGVNCHKQCKDRLSVECRRRAQSVSLEGSAPSPSPTHTHHRAFSFSLPRPGRRSSRPPEIREEEVQTVEDGVFDIHL.

The 123-residue stretch at 4 to 126 (TLDLDKGCTV…SLIDIESVPT (123 aa)) folds into the N-terminal Ras-GEF domain. 3 positions are modified to phosphoserine: S116, S117, and S147. Residues 154-387 (EPMELAEHLT…YQLSLQREPR (234 aa)) form the Ras-GEF domain. The interval 382 to 405 (LQREPRSKSSPTSPTSCTPPPRPP) is disordered. EF-hand domains are found at residues 426 to 461 (HIEK…FPYL) and 463 to 490 (AFGD…SSSV). The Ca(2+) site is built by D439, D441, D443, H445, E450, D468, N470, D472, C474, and E479. The Phorbol-ester/DAG-type zinc-finger motif lies at 498-548 (VHNLQESNSLRPVACRHCKALILGIYKQGLKCRACGVNCHKQCKDRLSVEC). A phosphoserine mark is found at S554 and S575. The interval 555–596 (VSLEGSAPSPSPTHTHHRAFSFSLPRPGRRSSRPPEIREEEV) is disordered.

Belongs to the RASGRP family. As to quaternary structure, forms a signaling complex with RAP1 and BRAF. Interacts with F-actin. Interacts with RAP1. In terms of tissue distribution, expressed in striatal neurons (at protein level). Expressed in the hematopoietic system. Detected in olfactory structures and deep cortical layers of brain.

Its subcellular location is the cytoplasm. The protein resides in the cytosol. It localises to the cell membrane. The protein localises to the synapse. It is found in the synaptosome. Its subcellular location is the cell projection. The protein resides in the ruffle membrane. In terms of biological role, functions as a calcium- and DAG-regulated nucleotide exchange factor specifically activating Rap through the exchange of bound GDP for GTP. May also activate other GTPases such as RRAS, RRAS2, NRAS, KRAS but not HRAS. Functions in aggregation of platelets and adhesion of T-lymphocytes and neutrophils probably through inside-out integrin activation. May function in the muscarinic acetylcholine receptor M1/CHRM1 signaling pathway. This is RAS guanyl-releasing protein 2 (Rasgrp2) from Rattus norvegicus (Rat).